Reading from the N-terminus, the 347-residue chain is MDGEDIPDFSSLKEETAYWKELSLKYKQSFQEARDELVEFQEGSRELEAELEAQLVQAEQRNRDLQADNQRLKYEVEALKEKLEHQYAQSYKQVSVLEDDLSQTRAIKEQLHKYVRELEQANDDLERAKRATIVSLEDFEQRLNQAIERNAFLESELDEKESLLVSVQRLKDEARDLRQELAVRERQQEVTRKSAPSSPTLDCEKMDSAVQASLSLPATPVGKGTENTFPSPKAIPNGFGTSPLTPSARISALNIVGDLLRKVGALESKLAACRNFAKDQASRKSYISGNVNCGVLNGNGTKFSRSGHTSFFDKGAVNGFDPAPPPPDPGLGSSRPSSAPGMLPLSV.

A coiled-coil region spans residues 28–190; the sequence is QSFQEARDEL…LAVRERQQEV (163 aa). The segment at 56–166 is self-association; sequence VQAEQRNRDL…LDEKESLLVS (111 aa). The interval 64-189 is interaction with KATNB1; the sequence is DLQADNQRLK…ELAVRERQQE (126 aa). The segment at 114 to 133 is required for interaction with PAFAH1B1; sequence YVRELEQANDDLERAKRATI. Positions 175 to 347 are interaction with CENPF; the sequence is RDLRQELAVR…SAPGMLPLSV (173 aa). The interval 189-256 is interaction with YWHAE; sequence EVTRKSAPSS…SARISALNIV (68 aa). Residues 191–347 are interaction with NEFL; sequence TRKSAPSSPT…SAPGMLPLSV (157 aa). Residues 195 to 256 are interaction with KATNA1; the sequence is APSSPTLDCE…SARISALNIV (62 aa). Ser215 carries the post-translational modification Phosphoserine. Residue Thr219 is modified to Phosphothreonine; by CDK1 and MAPK1. Ser231 bears the Phosphoserine mark. The segment at 241-280 is interaction with DISC1; sequence TSPLTPSARISALNIVGDLLRKVGALESKLAACRNFAKDQ. Ser242 is subject to Phosphoserine; by CDK1. Position 245 is a phosphothreonine; by CDK1 and MAPK1 (Thr245). The tract at residues 256 to 291 is required for localization to the centrosome and interaction with dynein, dynactin, tubulin gamma, PCM1 and PCNT; that stretch reads VGDLLRKVGALESKLAACRNFAKDQASRKSYISGNV. Cys273 carries the S-palmitoyl cysteine; by ZDHHC2, ZDHHC3 and ZDHHC7 lipid modification. Positions 314 to 347 are disordered; that stretch reads KGAVNGFDPAPPPPDPGLGSSRPSSAPGMLPLSV. Ser346 is modified (phosphoserine).

The protein belongs to the nudE family. Self-associates. Interacts with DISC1, dynein, dynactin, tubulin gamma, KATNA1, KATNB1, microtubules, PAFAH1B1, PCM1, PCNT, and YWHAE. Interacts directly with NEFL and indirectly with NEFH. Interacts (via C-terminus) with CENPF. Interacts with ZNF365. Interacts with PLEKHM1 (via N- and C-terminus). Interacts with GTP-bound RAB9A; the interaction may lead to RAB9A-dynein motor tethering. Post-translationally, phosphorylated in mitosis. Can be phosphorylated by CDK1, CDK5 and MAPK1. Phosphorylation by CDK5 promotes interaction with KATNA1 and YWHAE. Palmitoylation at Cys-273 reduces affinity for dynein.

Its subcellular location is the cytoplasm. The protein resides in the cytoskeleton. It is found in the microtubule organizing center. The protein localises to the centrosome. It localises to the chromosome. Its subcellular location is the centromere. The protein resides in the kinetochore. It is found in the spindle. Functionally, required for organization of the cellular microtubule array and microtubule anchoring at the centrosome. May regulate microtubule organization at least in part by targeting the microtubule severing protein KATNA1 to the centrosome. Also positively regulates the activity of the minus-end directed microtubule motor protein dynein. May enhance dynein-mediated microtubule sliding by targeting dynein to the microtubule plus ends. Required for several dynein- and microtubule-dependent processes such as the maintenance of Golgi integrity, the centripetal motion of secretory vesicles and the coupling of the nucleus and centrosome. Also required during brain development for the migration of newly formed neurons from the ventricular/subventricular zone toward the cortical plate. Required for mitosis in some cell types but appears to be dispensible for mitosis in cortical neuronal progenitors, which instead requires NDE1. Facilitates the polymerization of neurofilaments from the individual subunits NEFH and NEFL. Positively regulates lysosome peripheral distribution and ruffled border formation in osteoclasts. Plays a role, together with DISC1, in the regulation of neurite outgrowth. May act as a RAB9A/B effector that tethers RAB9-associated late endosomes to the dynein motor for their retrograde transport to the trans-Golgi network. This Macaca fascicularis (Crab-eating macaque) protein is Nuclear distribution protein nudE-like 1 (NDEL1).